A 195-amino-acid polypeptide reads, in one-letter code: Imidazoleglycerol-phosphate dehydratase (195 aa).

It belongs to the imidazoleglycerol-phosphate dehydratase family.

It localises to the cytoplasm. It catalyses the reaction D-erythro-1-(imidazol-4-yl)glycerol 3-phosphate = 3-(imidazol-4-yl)-2-oxopropyl phosphate + H2O. It participates in amino-acid biosynthesis; L-histidine biosynthesis; L-histidine from 5-phospho-alpha-D-ribose 1-diphosphate: step 6/9. This Cereibacter sphaeroides (strain ATCC 17023 / DSM 158 / JCM 6121 / CCUG 31486 / LMG 2827 / NBRC 12203 / NCIMB 8253 / ATH 2.4.1.) (Rhodobacter sphaeroides) protein is Imidazoleglycerol-phosphate dehydratase.